The chain runs to 450 residues: Tubulin alpha-3C chain (450 aa).

An MREC motif motif is present at residues 1–4; that stretch reads MREC. Q11 serves as a coordination point for GTP. Residue K40 is modified to N6-acetyllysine. GTP-binding residues include E71, S140, G144, T145, T179, N206, and N228. E71 contributes to the Mg(2+) binding site. Residue E254 is part of the active site. Y282 is modified (3'-nitrotyrosine). A Phosphoserine modification is found at S439. Residue Y450 is modified to 3'-nitrotyrosine.

It belongs to the tubulin family. As to quaternary structure, dimer of alpha and beta chains. A typical microtubule is a hollow water-filled tube with an outer diameter of 25 nm and an inner diameter of 15 nM. Alpha-beta heterodimers associate head-to-tail to form protofilaments running lengthwise along the microtubule wall with the beta-tubulin subunit facing the microtubule plus end conferring a structural polarity. Microtubules usually have 13 protofilaments but different protofilament numbers can be found in some organisms and specialized cells. Requires Mg(2+) as cofactor. Some glutamate residues at the C-terminus are polyglutamylated, resulting in polyglutamate chains on the gamma-carboxyl group. Polyglutamylation plays a key role in microtubule severing by spastin (SPAST). SPAST preferentially recognizes and acts on microtubules decorated with short polyglutamate tails: severing activity by SPAST increases as the number of glutamates per tubulin rises from one to eight, but decreases beyond this glutamylation threshold. Glutamylation is also involved in cilia motility. Post-translationally, some glutamate residues at the C-terminus are monoglycylated but not polyglycylated due to the absence of functional TTLL10 in human. Monoglycylation is mainly limited to tubulin incorporated into cilia and flagella axonemes, which is required for their stability and maintenance. Flagella glycylation controls sperm motility. Both polyglutamylation and monoglycylation can coexist on the same protein on adjacent residues, and lowering glycylation levels increases polyglutamylation, and reciprocally. In terms of processing, acetylation of alpha chains at Lys-40 is located inside the microtubule lumen. This modification has been correlated with increased microtubule stability, intracellular transport and ciliary assembly. Methylation of alpha chains at Lys-40 is found in mitotic microtubules and is required for normal mitosis and cytokinesis contributing to genomic stability. Post-translationally, nitration of Tyr-450 is irreversible and interferes with normal dynein intracellular distribution. In terms of processing, undergoes a tyrosination/detyrosination cycle, the cyclic removal and re-addition of a C-terminal tyrosine residue by the enzymes tubulin tyrosine carboxypeptidase (MATCAP1/KIAA0895L, VASH1 or VASH2) and tubulin tyrosine ligase (TTL), respectively. Tyrosination promotes microtubule interaction with CAP-Gly domain-containing proteins such as CLIP1, CLIP2 and DCTN1. Tyrosination regulates the initiation of dynein-dynactin motility via interaction with DCTN1, which brings the dynein-dynactin complex into contact with microtubules. In neurons, tyrosinated tubulins mediate the initiation of retrograde vesicle transport. Post-translationally, detyrosination is involved in metaphase plate congression by guiding chromosomes during mitosis: detyrosination promotes interaction with CENPE, promoting pole-proximal transport of chromosomes toward the equator. Detyrosination increases microtubules-dependent mechanotransduction in dystrophic cardiac and skeletal muscle. In cardiomyocytes, detyrosinated microtubules are required to resist to contractile compression during contraction: detyrosination promotes association with desmin (DES) at force-generating sarcomeres, leading to buckled microtubules and mechanical resistance to contraction. Expressed in testis.

The protein localises to the cytoplasm. Its subcellular location is the cytoskeleton. It catalyses the reaction GTP + H2O = GDP + phosphate + H(+). Tubulin is the major constituent of microtubules, a cylinder consisting of laterally associated linear protofilaments composed of alpha- and beta-tubulin heterodimers. Microtubules grow by the addition of GTP-tubulin dimers to the microtubule end, where a stabilizing cap forms. Below the cap, tubulin dimers are in GDP-bound state, owing to GTPase activity of alpha-tubulin. In Homo sapiens (Human), this protein is Tubulin alpha-3C chain (TUBA3C).